The primary structure comprises 266 residues: Ribonuclease HII (266 aa).

Residues 73 to 266 (SPVAGVDEAG…NCGSRQKCEG (194 aa)) form the RNase H type-2 domain. 3 residues coordinate a divalent metal cation: D79, E80, and D173.

This sequence belongs to the RNase HII family. Requires Mn(2+) as cofactor. It depends on Mg(2+) as a cofactor.

It localises to the cytoplasm. The catalysed reaction is Endonucleolytic cleavage to 5'-phosphomonoester.. Functionally, endonuclease that specifically degrades the RNA of RNA-DNA hybrids. This is Ribonuclease HII from Pelotomaculum thermopropionicum (strain DSM 13744 / JCM 10971 / SI).